The sequence spans 569 residues: Mitogen-activated protein kinase 8 (569 aa).

A Protein kinase domain is found at Y13–F304. ATP is bound by residues I19–V27 and K42. D139 acts as the Proton acceptor in catalysis. At T175 the chain carries Phosphothreonine. A TXY motif is present at residues T175–Y177. Phosphotyrosine is present on Y177. Residues T404 to G432 form a disordered region.

Belongs to the protein kinase superfamily. CMGC Ser/Thr protein kinase family. MAP kinase subfamily. Dually phosphorylated on Thr-175 and Tyr-177, which activates the enzyme. In terms of tissue distribution, expressed in leaves and panicles.

The catalysed reaction is L-seryl-[protein] + ATP = O-phospho-L-seryl-[protein] + ADP + H(+). It catalyses the reaction L-threonyl-[protein] + ATP = O-phospho-L-threonyl-[protein] + ADP + H(+). With respect to regulation, activated by threonine and tyrosine phosphorylation. This is Mitogen-activated protein kinase 8 (MPK8) from Oryza sativa subsp. japonica (Rice).